The primary structure comprises 240 residues: Phosphoribosylaminoimidazole-succinocarboxamide synthase (240 aa).

It belongs to the SAICAR synthetase family.

It carries out the reaction 5-amino-1-(5-phospho-D-ribosyl)imidazole-4-carboxylate + L-aspartate + ATP = (2S)-2-[5-amino-1-(5-phospho-beta-D-ribosyl)imidazole-4-carboxamido]succinate + ADP + phosphate + 2 H(+). It functions in the pathway purine metabolism; IMP biosynthesis via de novo pathway; 5-amino-1-(5-phospho-D-ribosyl)imidazole-4-carboxamide from 5-amino-1-(5-phospho-D-ribosyl)imidazole-4-carboxylate: step 1/2. The sequence is that of Phosphoribosylaminoimidazole-succinocarboxamide synthase from Wolbachia sp. subsp. Drosophila simulans (strain wRi).